We begin with the raw amino-acid sequence, 259 residues long: Ribonuclease HII (259 aa).

The RNase H type-2 domain occupies T70–E258. A divalent metal cation is bound by residues D76, E77, and D168.

The protein belongs to the RNase HII family. Requires Mn(2+) as cofactor. It depends on Mg(2+) as a cofactor.

It localises to the cytoplasm. It catalyses the reaction Endonucleolytic cleavage to 5'-phosphomonoester.. Endonuclease that specifically degrades the RNA of RNA-DNA hybrids. This Streptococcus pneumoniae serotype 4 (strain ATCC BAA-334 / TIGR4) protein is Ribonuclease HII.